We begin with the raw amino-acid sequence, 730 residues long: MGACPPKAKGPWAQLQKLLISWPVGEQDWEQYRDRVNMLQQERIRDSPLLQAAKENDLRLLKILLLNQSCDFQQRGAVGETALHVAALYDNLEAATLLMEAAPELAKEPALCEPFVGQTALHIAVMNQNLNLVRALLARGASVSARATGAAFRRSPHNLIYYGEHPLSFAACVGSEEIVRLLIEHGADIRAQDSLGNTVLHILILQPNKTFACQMYNLLLSYDEHSDHLQSLELVPNHQGLTPFKLAGVEGNTVMFQHLMQKRKHVQWTCGPLTSTLYDLTEIDSWGEELSFLELVVSSKKREARQILEQTPVKELVSFKWKKYGRPYFCVLASLYILYMICFTTCCIYRPLKLRDDNRTDPRDITILQQKLLQEAYVTHQDNIRLVGELVTVTGAVIILLLEIPDIFRVGASRYFGQTILGGPFHVIIITYASLVLLTMVMRLTNMNGEVVPLSFALVLGWCSVMYFARGFQMLGPFTIMIQKMIFGDLMRFCWLMAVVILGFASAFHITFQTEDPNNLGEFSDYPTALFSTFELFLTIIDGPANYSVDLPFMYCITYAAFAIIATLLMLNLFIAMMGDTHWRVAQERDELWRAQVVATTVMLERKMPRFLWPRSGICGYEYGLGDRWFLRVENHHDQNPLRVLRYVEAFKCSDKEDGQEQLSEKRPSTVESGMLSRASVAFQTPSLSRTTSQSSNSHRGWEILRRNTLGHLNLGLDLGEGDGEEVYHF.

Over 1–327 (MGACPPKAKG…SFKWKKYGRP (327 aa)) the chain is Cytoplasmic. 6 ANK repeats span residues 44–74 (IRDS…DFQQ), 78–107 (VGET…ELAK), 116–145 (VGQT…SVSA), 162–191 (YGEH…DIRA), 195–228 (LGNT…HSDH), and 239–268 (QGLT…HVQW). Residues 328-348 (YFCVLASLYILYMICFTTCCI) form a helical membrane-spanning segment. Residues 349–385 (YRPLKLRDDNRTDPRDITILQQKLLQEAYVTHQDNIR) lie on the Extracellular side of the membrane. An N-linked (GlcNAc...) asparagine glycan is attached at asparagine 358. The chain crosses the membrane as a helical span at residues 386 to 408 (LVGELVTVTGAVIILLLEIPDIF). At 409–419 (RVGASRYFGQT) the chain is on the cytoplasmic side. Residues 420-442 (ILGGPFHVIIITYASLVLLTMVM) form a helical membrane-spanning segment. Residues 443–448 (RLTNMN) lie on the Extracellular side of the membrane. The chain crosses the membrane as a helical span at residues 449–469 (GEVVPLSFALVLGWCSVMYFA). Residues 470-492 (RGFQMLGPFTIMIQKMIFGDLMR) are Cytoplasmic-facing. Residues 493–513 (FCWLMAVVILGFASAFHITFQ) form a helical membrane-spanning segment. The pore-forming intramembrane region spans 524 to 544 (SDYPTALFSTFELFLTIIDGP). Ca(2+) is bound at residue aspartate 542. Residues 557 to 577 (ITYAAFAIIATLLMLNLFIAM) traverse the membrane as a helical segment. The Cytoplasmic segment spans residues 578-730 (MGDTHWRVAQ…EGDGEEVYHF (153 aa)). Residues 598-602 (VATTV) form an interaction with S100A10 region. The involved in Ca(2+)-dependent inactivation stretch occupies residues 650 to 653 (AFKC). The residue at position 685 (threonine 685) is a Phosphothreonine. Residue serine 689 is modified to Phosphoserine. Positions 701–730 (GWEILRRNTLGHLNLGLDLGEGDGEEVYHF) are involved in Ca(2+)-dependent inactivation.

Belongs to the transient receptor (TC 1.A.4) family. TrpV subfamily. TRPV5 sub-subfamily. Homotetramer. Probably forms heterotetramers with TRPV6. Interacts with TRPV6. Interacts with S100A10 and probably with the ANAX2-S100A10 heterotetramer. The interaction with S100A10 is required for the trafficking to the plasma membrane. Interacts with calmodulin. Interacts with BSPRY, which results in its inactivation. In terms of processing, glycosylated. As to expression, detected in kidney cortex, in distal convoluted tubules and cortical collecting ducts (at protein level). Detected in duodenum, jejunum, ileum, kidney and placenta.

The protein resides in the cell membrane. Its subcellular location is the apical cell membrane. It catalyses the reaction Ca(2+)(in) = Ca(2+)(out). Its activity is regulated as follows. Activated by WNK3. In terms of biological role, constitutively active calcium selective cation channel thought to be involved in Ca(2+) reabsorption in kidney and intestine. Required for normal Ca(2+) reabsorption in the kidney distal convoluted tubules. The channel is activated by low internal calcium level and the current exhibits an inward rectification. A Ca(2+)-dependent feedback regulation includes fast channel inactivation and slow current decay. Heteromeric assembly with TRPV6 seems to modify channel properties. TRPV5-TRPV6 heteromultimeric concatemers exhibit voltage-dependent gating. The polypeptide is Transient receptor potential cation channel subfamily V member 5 (Trpv5) (Oryctolagus cuniculus (Rabbit)).